We begin with the raw amino-acid sequence, 491 residues long: F-box/LRR-repeat protein 7 (491 aa).

A disordered region spans residues Met1–Ser79. The segment covering Gly10 to Ser26 has biased composition (low complexity). Over residues Thr27–Ser55 the composition is skewed to polar residues. The region spanning Gln111–Ile157 is the F-box domain. LRR repeat units follow at residues Leu170–Gly195, Cys196–Gly221, Cys222–Gly247, Cys253–Asp281, Cys282–Arg307, Cys308–Asp333, Cys334–His359, Cys360–Gly385, Cys386–Lys411, Cys412–Ser437, and Cys438–Asp463.

It belongs to the FBXL7 family. In terms of assembly, part of the SCF (SKP1-CUL1-F-box) E3 ubiquitin-protein ligase complex SCF(FBXL7) composed of CUL1, SKP1, RBX1 and FBXL7. Interacts with AURKA; interaction takes place during mitosis but not in interphase. Interacts with BIRC5; this interaction allows BIRC5 to be polyubiquitinated by the SCF(FBXL7) E3 ubiquitin-protein ligase complex.

The protein localises to the cytoplasm. Its subcellular location is the cytoskeleton. It localises to the microtubule organizing center. The protein resides in the centrosome. It functions in the pathway protein modification; protein ubiquitination. Substrate recognition component of a SCF (SKP1-CUL1-F-box protein) E3 ubiquitin-protein ligase complex. During mitosis, it mediates the ubiquitination and subsequent proteasomal degradation of AURKA, causing mitotic arrest. It also regulates mitochondrial function by mediating the ubiquitination and proteasomal degradation of the apoptosis inhibitor BIRC5. This is F-box/LRR-repeat protein 7 (FBXL7) from Homo sapiens (Human).